Here is a 202-residue protein sequence, read N- to C-terminus: MSANASALAGAVLAGGESRRMGRDKARLRLRGETLAQRQVRVLREAGAEPVVIVRRAEQRMSVRAVEQVCDEFVGAGPLAGVQAALKAAAAAGARWIAVLAVDMPAIEAAWFGDLRRACRKGKGAVVRHADGFEPLAAIYPINALATAERRLRRGERSMQRFVAALVRQRKMRVVALPEEERWRVANWNRPEDRDRERRKHA.

Residues 13-15, K25, D71, and D103 each bind GTP; that span reads LAG. D103 is a Mg(2+) binding site.

The protein belongs to the MobA family. Mg(2+) is required as a cofactor.

It is found in the cytoplasm. It catalyses the reaction Mo-molybdopterin + GTP + H(+) = Mo-molybdopterin guanine dinucleotide + diphosphate. In terms of biological role, transfers a GMP moiety from GTP to Mo-molybdopterin (Mo-MPT) cofactor (Moco or molybdenum cofactor) to form Mo-molybdopterin guanine dinucleotide (Mo-MGD) cofactor. In Opitutus terrae (strain DSM 11246 / JCM 15787 / PB90-1), this protein is Probable molybdenum cofactor guanylyltransferase.